Here is a 61-residue protein sequence, read N- to C-terminus: Probradykinin-1 (61 aa).

The N-terminal stretch at 1–22 (MSFLKKSLFLVLFLGLVSFSIC) is a signal peptide. The propeptide occupies 23–48 (EEEKRETEEEENKDETEEQSEEKKRF). The tract at residues 24-61 (EEKRETEEEENKDETEEQSEEKKRFEPVPPGFTPFRLT) is disordered. Acidic residues predominate over residues 30–42 (EEEENKDETEEQS).

The protein belongs to the frog skin active peptide (FSAP) family. Bradykinin-related peptide subfamily. Expressed by the skin glands.

It localises to the secreted. Its function is as follows. May produce in vitro relaxation of rat arterial smooth muscle and constriction of intestinal smooth muscle. May target bradykinin receptors (BDKRB). This is Probradykinin-1 from Pithecopus azureus (Orange-legged monkey tree frog).